The primary structure comprises 813 residues: Phosphoribosylformylglycinamidine synthase subunit PurL (813 aa).

Residue H56 is part of the active site. Y59 and K103 together coordinate ATP. E105 contacts Mg(2+). Residues S106–H109 and R128 contribute to the substrate site. The active-site Proton acceptor is H107. D129 contacts Mg(2+). Q253 is a binding site for substrate. D281 is a Mg(2+) binding site. A substrate-binding site is contributed by E325–Q327. The ATP site is built by N511 and G548. N549 is a Mg(2+) binding site. Substrate is bound at residue S551.

It belongs to the FGAMS family. Monomer. Part of the FGAM synthase complex composed of 1 PurL, 1 PurQ and 2 PurS subunits.

It is found in the cytoplasm. The catalysed reaction is N(2)-formyl-N(1)-(5-phospho-beta-D-ribosyl)glycinamide + L-glutamine + ATP + H2O = 2-formamido-N(1)-(5-O-phospho-beta-D-ribosyl)acetamidine + L-glutamate + ADP + phosphate + H(+). Its pathway is purine metabolism; IMP biosynthesis via de novo pathway; 5-amino-1-(5-phospho-D-ribosyl)imidazole from N(2)-formyl-N(1)-(5-phospho-D-ribosyl)glycinamide: step 1/2. Part of the phosphoribosylformylglycinamidine synthase complex involved in the purines biosynthetic pathway. Catalyzes the ATP-dependent conversion of formylglycinamide ribonucleotide (FGAR) and glutamine to yield formylglycinamidine ribonucleotide (FGAM) and glutamate. The FGAM synthase complex is composed of three subunits. PurQ produces an ammonia molecule by converting glutamine to glutamate. PurL transfers the ammonia molecule to FGAR to form FGAM in an ATP-dependent manner. PurS interacts with PurQ and PurL and is thought to assist in the transfer of the ammonia molecule from PurQ to PurL. The chain is Phosphoribosylformylglycinamidine synthase subunit PurL from Corynebacterium jeikeium (strain K411).